A 338-amino-acid chain; its full sequence is Glyceraldehyde-3-phosphate dehydrogenase (338 aa).

NAD(+) is bound by residues 12–13, aspartate 34, and arginine 79; that span reads RI. Residues 150–152, threonine 181, 210–211, and arginine 233 contribute to the D-glyceraldehyde 3-phosphate site; these read SCT and TG. Residue cysteine 151 is the Nucleophile of the active site. Asparagine 316 serves as a coordination point for NAD(+).

It belongs to the glyceraldehyde-3-phosphate dehydrogenase family. In terms of assembly, homotetramer.

The protein localises to the cytoplasm. It carries out the reaction D-glyceraldehyde 3-phosphate + phosphate + NAD(+) = (2R)-3-phospho-glyceroyl phosphate + NADH + H(+). The protein operates within carbohydrate degradation; glycolysis; pyruvate from D-glyceraldehyde 3-phosphate: step 1/5. The protein is Glyceraldehyde-3-phosphate dehydrogenase (GPD) of Yarrowia lipolytica (strain CLIB 122 / E 150) (Yeast).